The chain runs to 399 residues: Elongation factor Tu (399 aa).

The region spanning 10–209 (KPHVNVGTIG…EVDKYIPTPQ (200 aa)) is the tr-type G domain. The interval 19-26 (GHVDHGKT) is G1. GTP is bound at residue 19 to 26 (GHVDHGKT). Residue T26 participates in Mg(2+) binding. The segment at 60–64 (GITIA) is G2. Residues 81–84 (DCPG) are G3. Residues 81–85 (DCPGH) and 136–139 (NKQD) each bind GTP. The tract at residues 136 to 139 (NKQD) is G4. Residues 174-176 (SAL) are G5.

It belongs to the TRAFAC class translation factor GTPase superfamily. Classic translation factor GTPase family. EF-Tu/EF-1A subfamily. In terms of assembly, monomer.

The protein localises to the cytoplasm. The catalysed reaction is GTP + H2O = GDP + phosphate + H(+). Its function is as follows. GTP hydrolase that promotes the GTP-dependent binding of aminoacyl-tRNA to the A-site of ribosomes during protein biosynthesis. The chain is Elongation factor Tu from Helicobacter hepaticus (strain ATCC 51449 / 3B1).